Consider the following 205-residue polypeptide: Glycerol-3-phosphate acyltransferase (205 aa).

A run of 6 helical transmembrane segments spans residues 5–25 (LALG…GYLA), 54–74 (GPAA…VWLA), 87–107 (IVLG…WLAF), 117–137 (VGLL…VWGV), 138–158 (CFAV…ATPL), and 162–182 (LWRA…YIVW).

The protein belongs to the PlsY family. As to quaternary structure, probably interacts with PlsX.

It localises to the cell inner membrane. It carries out the reaction an acyl phosphate + sn-glycerol 3-phosphate = a 1-acyl-sn-glycero-3-phosphate + phosphate. It participates in lipid metabolism; phospholipid metabolism. Catalyzes the transfer of an acyl group from acyl-phosphate (acyl-PO(4)) to glycerol-3-phosphate (G3P) to form lysophosphatidic acid (LPA). This enzyme utilizes acyl-phosphate as fatty acyl donor, but not acyl-CoA or acyl-ACP. In Gloeobacter violaceus (strain ATCC 29082 / PCC 7421), this protein is Glycerol-3-phosphate acyltransferase.